A 391-amino-acid polypeptide reads, in one-letter code: D-xylose 1-dehydrogenase (NADP(+)) (391 aa).

This sequence belongs to the Gfo/Idh/MocA family.

The catalysed reaction is D-xylose + NADP(+) = D-xylono-1,5-lactone + NADPH + H(+). NADP-dependent D-xylose dehydrogenase catalyzing the oxydation of D-xylose into D-xylonolactone. Also displays some, albeit lower activity with D-glucose, D-galactose and L-arabinose as substrate. Probably not involved in D-xylose degradation, as it has been shown that H.jecorina assimilates D-xylose via D-xylose reductase and xylitol dehydrogenase, and it is unable to grow on D-xylonic acid as sole carbon source. May play a role in the regeneration of NADP(+) in the presence of D-xylose. The polypeptide is D-xylose 1-dehydrogenase (NADP(+)) (Hypocrea jecorina (strain ATCC 56765 / BCRC 32924 / NRRL 11460 / Rut C-30) (Trichoderma reesei)).